We begin with the raw amino-acid sequence, 1079 residues long: Intraflagellar transport protein 80 (1079 aa).

The disordered stretch occupies residues 495-514; that stretch reads GDMIRPSTVQNQPSTQGLPN. The segment covering 501-514 has biased composition (polar residues); that stretch reads STVQNQPSTQGLPN.

The protein resides in the cell projection. Its subcellular location is the cilium. It is found in the flagellum. The protein localises to the cytoplasm. It localises to the cytoskeleton. The protein resides in the flagellum axoneme. Its subcellular location is the flagellum basal body. In terms of biological role, component of the intraflagellar transport complex B (IFT-B) involved in flagellar assembly. The protein is Intraflagellar transport protein 80 of Giardia intestinalis (strain ATCC 50803 / WB clone C6) (Giardia lamblia).